We begin with the raw amino-acid sequence, 239 residues long: Large ribosomal subunit protein uL3 (239 aa).

Disordered regions lie at residues 140–164 (SHRS…KMPG) and 211–239 (PLPK…QEGA). An N5-methylglutamine modification is found at Gln-151.

This sequence belongs to the universal ribosomal protein uL3 family. In terms of assembly, part of the 50S ribosomal subunit. Forms a cluster with proteins L14 and L19. Post-translationally, methylated by PrmB.

Its function is as follows. One of the primary rRNA binding proteins, it binds directly near the 3'-end of the 23S rRNA, where it nucleates assembly of the 50S subunit. This chain is Large ribosomal subunit protein uL3, found in Bradyrhizobium sp. (strain ORS 278).